Reading from the N-terminus, the 252-residue chain is MTPLCPRPALCYHFLTSLLRSAMQNARGARQRAEAAVLSGPGPPLGRAAQHGIPRPLSSAGRLSQGCRGASTVGAAGWKGELPKAGGSPAPGPETPAISPSKRARPAEVGGMQLRFARLSEHATAPTRGSARAAGYDLYSAYDYTIPPMEKAVVKTDIQIALPSGCYGRVAPRSGLAAKHFIDVGAGVIDEDYRGNVGVVLFNFGKEKFEVKKGDRIAQLICERIFYPEIEEVQALDDTERGSGGFGSTGKN.

The N-terminal 69 residues, 1–69, are a transit peptide targeting the mitochondrion; the sequence is MTPLCPRPAL…AGRLSQGCRG (69 aa). 3 positions are modified to phosphoserine: cysteine 11, serine 88, and serine 99. A disordered region spans residues 78 to 104; sequence WKGELPKAGGSPAPGPETPAISPSKRA. DUTP-binding positions include 173–175, 187–193, glycine 198, arginine 241, and 246–247; these read RSG, GVIDEDY, and FG.

The protein belongs to the dUTPase family. Homotrimer. Requires Mg(2+) as cofactor. Post-translationally, nuclear isoform 2 is phosphorylated in vivo on Ser-11, a reaction that can be catalyzed in vitro by CDC2. Phosphorylation in mature T-cells occurs in a cell cycle-dependent manner. Isoform 3 is not phosphorylated. As to expression, found in a variety of tissues. Isoform 3 expression is constitutive, while isoform 2 expression correlates with the onset of DNA replication (at protein level). Isoform 2 degradation coincides with the cessation of nuclear DNA replication (at protein level).

It is found in the nucleus. Its subcellular location is the mitochondrion. The enzyme catalyses dUTP + H2O = dUMP + diphosphate + H(+). Its pathway is pyrimidine metabolism; dUMP biosynthesis; dUMP from dCTP (dUTP route): step 2/2. Phosphorylation is necessary for activity. Functionally, catalyzes the cleavage of 2'-deoxyuridine 5'-triphosphate (dUTP) into 2'-deoxyuridine 5'-monophosphate (dUMP) and inorganic pyrophosphate and through its action efficiently prevents uracil misincorporation into DNA and at the same time provides dUMP, the substrate for de novo thymidylate biosynthesis. Inhibits peroxisome proliferator-activated receptor (PPAR) activity by binding of its N-terminal to PPAR, preventing the latter's dimerization with retinoid X receptor. Essential for embryonic development. The protein is Deoxyuridine 5'-triphosphate nucleotidohydrolase, mitochondrial (DUT) of Homo sapiens (Human).